The following is a 392-amino-acid chain: Serpin B11 (392 aa).

The tract at residues 341-365 is RCL; that stretch reads EEGTEAAAATGDSIAVKSLPMRAQF.

It belongs to the serpin family. Ov-serpin subfamily. In terms of tissue distribution, detected in a restricted number of tissues, including lung, placenta, prostate, and tonsil.

It localises to the cytoplasm. In terms of biological role, has no serine protease inhibitory activity, probably due to variants in the scaffold impairing conformational change. The protein is Serpin B11 (SERPINB11) of Homo sapiens (Human).